We begin with the raw amino-acid sequence, 151 residues long: Acidic phospholipase A2 3 (151 aa).

The N-terminal stretch at 1 to 27 (MYPAHLLVLLAVCVSLLGAASIPARPL) is a signal peptide. Cystine bridges form between Cys38–Cys104, Cys54–Cys151, Cys56–Cys72, Cys71–Cys132, Cys78–Cys125, Cys88–Cys118, and Cys111–Cys123. Residues Tyr55, Gly57, and Gly59 each contribute to the Ca(2+) site. Residue His75 is part of the active site. Ca(2+) is bound at residue Asp76. Asp126 is an active-site residue.

Belongs to the phospholipase A2 family. Group I subfamily. D49 sub-subfamily. The cofactor is Ca(2+). In terms of tissue distribution, expressed by the venom gland.

The protein localises to the secreted. The catalysed reaction is a 1,2-diacyl-sn-glycero-3-phosphocholine + H2O = a 1-acyl-sn-glycero-3-phosphocholine + a fatty acid + H(+). In terms of biological role, PLA2 catalyzes the calcium-dependent hydrolysis of the 2-acyl groups in 3-sn-phosphoglycerides. The chain is Acidic phospholipase A2 3 from Tropidechis carinatus (Australian rough-scaled snake).